The following is a 422-amino-acid chain: MSRRVVVTGIGVVAPGGIGAARFWDLLAGGRTATRRISLFDPARLRSQIAAECDFDPSAHGLDDETVRRCDRYVQFALVATAEAVRDAGLDTTREDPWRMGAVLGTAVGGTTRLEHDYVLVSEGGSRWDVDHRRAEPHLHRAFAPSTLASTVAETFGAQGPVQTVSTGCTSGLDAVGYAYHAIAEGRADVCLAGASDSPISPITMACFDAIKATSPSNDDPEHASRPFDARRNGFVMGEGGAVLVLEELEHARARGADVYCELAGYATFGNAHHMTGLTREGLEMARAIDTALDMARLDGTDIDYVNAHGSGTQQNDRHETAAVKRSLGEHAYRTPMSSIKSMVGHSLGAIGSIEVVACVLALAHQVVPPTANYETPDPECDLDYVPREARERELRSVLSVGSGFGGFQSAVVLTGPERRLR.

Residues 2-416 (SRRVVVTGIG…GFQSAVVLTG (415 aa)) enclose the Ketosynthase family 3 (KS3) domain. Catalysis depends on for beta-ketoacyl synthase activity residues Cys169, His309, and His346.

It belongs to the thiolase-like superfamily. Beta-ketoacyl-ACP synthases family.

Its function is as follows. Involved in developmentally regulated synthesis of a compound biosynthetically related to polyketide antibiotics which is essential for spore color in Streptomyces halstedii. The polypeptide is Putative polyketide beta-ketoacyl synthase 1 (sch1) (Streptomyces halstedii).